Here is a 189-residue protein sequence, read N- to C-terminus: HGPRTase-like protein 1 (189 aa).

It belongs to the purine/pyrimidine phosphoribosyltransferase family. Archaeal HPRT subfamily.

Functionally, may catalyze a purine salvage reaction, the substrate is unknown. The sequence is that of HGPRTase-like protein 1 from Natrialba magadii (strain ATCC 43099 / DSM 3394 / CCM 3739 / CIP 104546 / IAM 13178 / JCM 8861 / NBRC 102185 / NCIMB 2190 / MS3) (Natronobacterium magadii).